A 646-amino-acid polypeptide reads, in one-letter code: DNA mismatch repair protein MutL (646 aa).

2 disordered regions span residues 356-380 (FENRTASNPPAEKPDEETDRVNENS) and 415-452 (TKNSEGLFDSEATSNEAASAEIESSEDDVRETEHAKPH). Low complexity predominate over residues 424–436 (SEATSNEAASAEI).

This sequence belongs to the DNA mismatch repair MutL/HexB family.

Functionally, this protein is involved in the repair of mismatches in DNA. It is required for dam-dependent methyl-directed DNA mismatch repair. May act as a 'molecular matchmaker', a protein that promotes the formation of a stable complex between two or more DNA-binding proteins in an ATP-dependent manner without itself being part of a final effector complex. This chain is DNA mismatch repair protein MutL, found in Staphylococcus carnosus (strain TM300).